We begin with the raw amino-acid sequence, 1414 residues long: DNA-directed RNA polymerase subunit beta' (1414 aa).

Residues C70, C72, C85, and C88 each coordinate Zn(2+). Residues D461, D463, and D465 each coordinate Mg(2+). Zn(2+) contacts are provided by C820, C894, C901, and C904.

The protein belongs to the RNA polymerase beta' chain family. The RNAP catalytic core consists of 2 alpha, 1 beta, 1 beta' and 1 omega subunit. When a sigma factor is associated with the core the holoenzyme is formed, which can initiate transcription. Mg(2+) serves as cofactor. The cofactor is Zn(2+).

The catalysed reaction is RNA(n) + a ribonucleoside 5'-triphosphate = RNA(n+1) + diphosphate. Its function is as follows. DNA-dependent RNA polymerase catalyzes the transcription of DNA into RNA using the four ribonucleoside triphosphates as substrates. The polypeptide is DNA-directed RNA polymerase subunit beta' (Cupriavidus taiwanensis (strain DSM 17343 / BCRC 17206 / CCUG 44338 / CIP 107171 / LMG 19424 / R1) (Ralstonia taiwanensis (strain LMG 19424))).